The sequence spans 132 residues: Vesicle transport protein GOT1A (132 aa).

Over 1–9 (MISITEWQK) the chain is Cytoplasmic. The chain crosses the membrane as a helical span at residues 10–30 (IGVGITGFGIFFILFGTLLYF). Asp31 is a topological domain (lumenal). Residues 32–52 (SVLLAFGNLLFLTGLSLIIGL) traverse the membrane as a helical segment. Residues 53 to 68 (RKTFWFFFQRHKLKGT) are Cytoplasmic-facing. The helical transmembrane segment at 69-89 (SFLLGGVVIVLLRWPLLGMFL) threads the bilayer. Residues 90 to 100 (ETYGFFSLFKG) lie on the Lumenal side of the membrane. Residues 101–121 (FFPVAFGFLGNVCNIPFLGAL) form a helical membrane-spanning segment. Residues 122 to 132 (FRRLQGTSSMV) are Cytoplasmic-facing.

This sequence belongs to the GOT1 family.

The protein resides in the golgi apparatus membrane. In terms of biological role, may be involved in fusion of ER-derived transport vesicles with the Golgi complex. This chain is Vesicle transport protein GOT1A, found in Homo sapiens (Human).